A 461-amino-acid chain; its full sequence is Coagulation factor IX (461 aa).

The N-terminal stretch at Met-1–Cys-28 is a signal peptide. Positions Thr-29–Arg-46 are excised as a propeptide. The Ca(2+) site is built by Tyr-47, Asn-48, Glu-53, Glu-54, Glu-61, Glu-63, Glu-66, Glu-67, Glu-72, Glu-73, and Glu-76. The 46-residue stretch at Tyr-47–Val-92 folds into the Gla domain. 4-carboxyglutamate occurs at positions 53, 54, 61, 63, 66, 67, 72, 73, 76, 79, and 82. Glu-61 is a binding site for Mg(2+). Cysteines 64 and 69 form a disulfide. Residue Glu-66 participates in Mg(2+) binding. A Mg(2+)-binding site is contributed by Glu-72. Glu-76 contributes to the Mg(2+) binding site. Ca(2+) is bound at residue Glu-82. Mg(2+) is bound at residue Glu-82. An O-linked (GalNAc...) threonine glycan is attached at Thr-85. Residues Glu-86, Asp-93, Gly-94, and Gln-96 each coordinate Ca(2+). Glu-86 is modified (4-carboxyglutamate). Residue Glu-86 participates in Mg(2+) binding. In terms of domain architecture, EGF-like 1; calcium-binding spans Asp-93 to Glu-129. 10 cysteine pairs are disulfide-bonded: Cys-97/Cys-108, Cys-102/Cys-117, Cys-119/Cys-128, Cys-134/Cys-145, Cys-141/Cys-155, Cys-157/Cys-170, Cys-178/Cys-335, Cys-252/Cys-268, Cys-382/Cys-396, and Cys-407/Cys-435. Residue Ser-99 is glycosylated (O-linked (Glc...) serine). Ser-107 carries an O-linked (Fuc...) serine glycan. 2 residues coordinate Ca(2+): Asp-110 and Asp-111. At Asp-110 the chain carries (3R)-3-hydroxyaspartate. Ser-114 is modified (phosphoserine). The region spanning Leu-130–Glu-171 is the EGF-like 2 domain. A propeptide spans Ala-192–Arg-226 (activation peptide). Residue Tyr-201 is modified to Sulfotyrosine. An N-linked (GlcNAc...) asparagine glycan is attached at Asn-203. Ser-204 carries the post-translational modification Phosphoserine. Thr-205 carries the phosphothreonine; alternate modification. Thr-205 carries an O-linked (GalNAc...) threonine; alternate glycan. N-linked (GlcNAc...) asparagine glycosylation occurs at Asn-213. 2 O-linked (GalNAc...) threonine glycosylation sites follow: Thr-215 and Thr-225. One can recognise a Peptidase S1 domain in the interval Val-227 to Lys-459. The active-site Charge relay system is the His-267. Ca(2+)-binding residues include Glu-281, Asn-283, Glu-286, Glu-288, and Glu-291. The active-site Charge relay system is Asp-315. Ser-411 functions as the Charge relay system in the catalytic mechanism.

The protein belongs to the peptidase S1 family. In terms of assembly, heterodimer of a light chain and a heavy chain; disulfide-linked. Interacts (inactive and activated) with F11 (activated) in calcium-dependent manner. Interacts with SERPINC1. Interacts (activated) with iripin-8, a serine protease inhibitor from Ixodes ricinus saliva. Interacts (inactive and activated) with nitrophorin-2, an anticoagulant protein from Rhodnius prolixus. Activated by factor XIa, which excises the activation peptide. The propeptide can also be removed by snake venom protease. Activated by coagulation factor VIIa-tissue factor (F7-F3) complex in calcium-dependent manner. Post-translationally, the iron and 2-oxoglutarate dependent 3-hydroxylation of aspartate and asparagine is (R) stereospecific within EGF domains. Detected in blood plasma (at protein level). Synthesized primarily in the liver and secreted in plasma.

The protein resides in the secreted. It catalyses the reaction Selective cleavage of Arg-|-Ile bond in factor X to form factor Xa.. In terms of biological role, factor IX is a vitamin K-dependent plasma protein that participates in the intrinsic pathway of blood coagulation by converting factor X to its active form in the presence of Ca(2+) ions, phospholipids, and factor VIIIa. The chain is Coagulation factor IX (F9) from Homo sapiens (Human).